A 1181-amino-acid chain; its full sequence is Integrin alpha-7 (1181 aa).

Positions 1–33 (MAGARSRDPWGASGICYLFGSLLVELLFSRAVA) are cleaved as a signal peptide. The Extracellular segment spans residues 34-1082 (FNLDVMGALR…MAVVAEGVPW (1049 aa)). FG-GAP repeat units lie at residues 35–103 (NLDV…ETDC), 110–175 (QGAD…IRDE), 185–238 (EGRP…SADL), 292–349 (DRLP…ASRL), 350–411 (VPEV…HWAG), 412–467 (ISPL…GVVA), and 471–530 (QVLE…IAPR). Asparagine 86 carries an N-linked (GlcNAc...) asparagine glycan. 3 disulfides stabilise this stretch: cysteine 94–cysteine 103, cysteine 140–cysteine 163, and cysteine 184–cysteine 197. 13 residues coordinate Ca(2+): aspartate 372, asparagine 374, aspartate 376, aspartate 380, aspartate 434, asparagine 436, aspartate 438, aspartate 442, aspartate 492, aspartate 494, asparagine 496, tyrosine 498, and aspartate 500. 6 cysteine pairs are disulfide-bonded: cysteine 539/cysteine 546, cysteine 552/cysteine 615, cysteine 681/cysteine 687, cysteine 781/cysteine 792, cysteine 939/cysteine 994, and cysteine 1001/cysteine 1006. N-linked (GlcNAc...) asparagine glycosylation occurs at asparagine 786. A compositionally biased stretch (basic and acidic residues) spans 950 to 961 (VDSRDRRRRELE). Positions 950–978 (VDSRDRRRRELEPPEQQEPGERQEPSMSW) are disordered. N-linked (GlcNAc...) asparagine glycosylation occurs at asparagine 989. Residues asparagine 1025 and asparagine 1045 are each glycosylated (N-linked (GlcNAc...) asparagine). Residues 1083–1103 (WVILLAVLAGLLVLALLVLLL) form a helical membrane-spanning segment. Topologically, residues 1104 to 1181 (WKMGFFKRAK…PDGHPGPGTA (78 aa)) are cytoplasmic. A GFFKR motif motif is present at residues 1107-1111 (GFFKR). The tract at residues 1138-1181 (EKTGTILRNNWGSPRREGPDAHPILAADGHPELGPDGHPGPGTA) is disordered. Tandem repeats lie at residues 1157-1160 (DAHP), 1165-1168 (DGHP), and 1173-1176 (DGHP). Residues 1157–1176 (DAHPILAADGHPELGPDGHP) form a 3 X 4 AA repeats of D-X-H-P region.

This sequence belongs to the integrin alpha chain family. Heterodimer of an alpha and a beta subunit. The alpha subunit is composed of a heavy and a light chain linked by a disulfide bond. Alpha-7 associates with beta-1. Interacts with COMP. Interacts (via C-terminus intracellular tail region) with CIB1; the interaction is stabilized/increased in a calcium- and magnesium-dependent manner. Post-translationally, ADP-ribosylated on at least two sites of the extracellular domain in skeletal myotubes. A 70 kDa form is created by proteolytic cleavage. Cleavage is elevated during myogenic differentiation and the cleaved form enhances cell adhesion and spreading on laminin. As to expression, isoforms containing segment A are predominantly expressed in skeletal muscle. Isoforms containing segment B are abundantly expressed in skeletal muscle, moderately in cardiac muscle, small intestine, colon, ovary and prostate and weakly in lung and testes. Isoforms containing segment X2D are expressed at low levels in fetal and adult skeletal muscle and in cardiac muscle, but are not detected in myoblasts and myotubes. In muscle fibers isoforms containing segment A and B are expressed at myotendinous and neuromuscular junctions; isoforms containing segment C are expressed at neuromuscular junctions and at extrasynaptic sites. Isoforms containing segments X1 or X2 or, at low levels, X1X2 are expressed in fetal and adult skeletal muscle (myoblasts and myotubes) and cardiac muscle.

It is found in the membrane. Integrin alpha-7/beta-1 is the primary laminin receptor on skeletal myoblasts and adult myofibers. During myogenic differentiation, it may induce changes in the shape and mobility of myoblasts, and facilitate their localization at laminin-rich sites of secondary fiber formation. It is involved in the maintenance of the myofibers cytoarchitecture as well as for their anchorage, viability and functional integrity. Isoform Alpha-7X2B and isoform Alpha-7X1B promote myoblast migration on laminin 1 and laminin 2/4, but isoform Alpha-7X1B is less active on laminin 1 (In vitro). Acts as a Schwann cell receptor for laminin-2. Acts as a receptor of COMP and mediates its effect on vascular smooth muscle cells (VSMCs) maturation. Required to promote contractile phenotype acquisition in differentiated airway smooth muscle (ASM) cells. This Homo sapiens (Human) protein is Integrin alpha-7 (ITGA7).